The sequence spans 85 residues: Small ribosomal subunit protein bS18c (85 aa).

The protein belongs to the bacterial ribosomal protein bS18 family. As to quaternary structure, part of the 30S ribosomal subunit.

It localises to the plastid. Its subcellular location is the chloroplast. This is Small ribosomal subunit protein bS18c from Zygnema circumcarinatum (Green alga).